The following is a 389-amino-acid chain: Lipid-A-disaccharide synthase (389 aa).

This sequence belongs to the LpxB family.

It catalyses the reaction a lipid X + a UDP-2-N,3-O-bis[(3R)-3-hydroxyacyl]-alpha-D-glucosamine = a lipid A disaccharide + UDP + H(+). It participates in bacterial outer membrane biogenesis; LPS lipid A biosynthesis. Its function is as follows. Condensation of UDP-2,3-diacylglucosamine and 2,3-diacylglucosamine-1-phosphate to form lipid A disaccharide, a precursor of lipid A, a phosphorylated glycolipid that anchors the lipopolysaccharide to the outer membrane of the cell. This chain is Lipid-A-disaccharide synthase, found in Albidiferax ferrireducens (strain ATCC BAA-621 / DSM 15236 / T118) (Rhodoferax ferrireducens).